The following is a 108-amino-acid chain: Trp operon repressor homolog (108 aa).

The DNA-binding element occupies 59-82 (QRQISQLLGVGVATITRGSNELKS).

This sequence belongs to the TrpR family. As to quaternary structure, homodimer.

The protein localises to the cytoplasm. Functionally, this protein is an aporepressor. When complexed with L-tryptophan it binds the operator region of the trp operon and prevents the initiation of transcription. The protein is Trp operon repressor homolog of Aliivibrio fischeri (strain ATCC 700601 / ES114) (Vibrio fischeri).